The sequence spans 130 residues: Abscisic acid and environmental stress-inducible protein TAS14 (130 aa).

The interval 1–130 is disordered; that stretch reads MAQYGNQDQM…KIKDKIPGMH (130 aa). The segment covering 27–58 has biased composition (gly residues); it reads QGTGTGGMMGGTGTGGMMGGTGGEYGTQGMGT. Basic and acidic residues-rich tracts occupy residues 61-73 and 92-130; these read HHHE…RRSD and KEKI…PGMH.

Belongs to the plant dehydrin family.

In Solanum lycopersicum (Tomato), this protein is Abscisic acid and environmental stress-inducible protein TAS14 (TAS14).